Consider the following 219-residue polypeptide: MSESTLHVRYLGQQDYESVWHAMQEYTDNRDSSSPDQLWIVEHPPVFTQGQAGKSEHILNPGDIPVIQVDRGGQVTYHGPGQLVAYPLINIKRLKIGVRQLVTDIENSIVQMLENYQVKAYAKADAPGVYVDERKVASLGLRIRKGCSFHGLALNVDMDMSPFQRINPCGYAGLEMVQCKQLGGPQTVEEAGEQLVKTFSHNLGYQNLVHHQGLSQSYE.

The BPL/LPL catalytic domain occupies 32–207 (SSSPDQLWIV…TFSHNLGYQN (176 aa)). Residues 71 to 78 (RGGQVTYH), 138 to 140 (SLG), and 151 to 153 (GLA) each bind substrate. The active-site Acyl-thioester intermediate is Cys169.

It belongs to the LipB family.

The protein localises to the cytoplasm. The enzyme catalyses octanoyl-[ACP] + L-lysyl-[protein] = N(6)-octanoyl-L-lysyl-[protein] + holo-[ACP] + H(+). It participates in protein modification; protein lipoylation via endogenous pathway; protein N(6)-(lipoyl)lysine from octanoyl-[acyl-carrier-protein]: step 1/2. Its function is as follows. Catalyzes the transfer of endogenously produced octanoic acid from octanoyl-acyl-carrier-protein onto the lipoyl domains of lipoate-dependent enzymes. Lipoyl-ACP can also act as a substrate although octanoyl-ACP is likely to be the physiological substrate. This is Octanoyltransferase from Shewanella woodyi (strain ATCC 51908 / MS32).